A 212-amino-acid chain; its full sequence is Deoxyribose-phosphate aldolase (212 aa).

Residue Asp90 is the Proton donor/acceptor of the active site. The active-site Schiff-base intermediate with acetaldehyde is Lys151. The active-site Proton donor/acceptor is Lys176.

It belongs to the DeoC/FbaB aldolase family. DeoC type 1 subfamily.

The protein resides in the cytoplasm. It catalyses the reaction 2-deoxy-D-ribose 5-phosphate = D-glyceraldehyde 3-phosphate + acetaldehyde. It participates in carbohydrate degradation; 2-deoxy-D-ribose 1-phosphate degradation; D-glyceraldehyde 3-phosphate and acetaldehyde from 2-deoxy-alpha-D-ribose 1-phosphate: step 2/2. Its function is as follows. Catalyzes a reversible aldol reaction between acetaldehyde and D-glyceraldehyde 3-phosphate to generate 2-deoxy-D-ribose 5-phosphate. The protein is Deoxyribose-phosphate aldolase of Halobacterium salinarum (strain ATCC 29341 / DSM 671 / R1).